Reading from the N-terminus, the 261-residue chain is Cell division protein DivIB (261 aa).

Over 1-27 (MEKGKVVVLEDRVPKLKERRRQKANRR) the chain is Cytoplasmic. A helical membrane pass occupies residues 28–48 (LIAYLSFFFLFILCVLYFQSP). The tract at residues 47–117 (SPLGAVGHVE…PNTIAIHVRE (71 aa)) is alpha. The Extracellular segment spans residues 49 to 261 (LGAVGHVEVS…KEDGDETTSP (213 aa)). Positions 50 to 118 (GAVGHVEVSG…NTIAIHVREW (69 aa)) constitute a POTRA domain. The segment at 118 to 230 (WRRIAYVYDR…YPAIAAALDR (113 aa)) is beta. Positions 231–260 (NVKGVIHLEVGSYFVPYSPPKKEDGDETTS) are gamma.

It belongs to the FtsQ/DivIB family. DivIB subfamily.

It localises to the cell membrane. Its function is as follows. Cell division protein that may be involved in stabilizing or promoting the assembly of the division complex. The polypeptide is Cell division protein DivIB (Geobacillus kaustophilus (strain HTA426)).